We begin with the raw amino-acid sequence, 1382 residues long: MKPPTVHIPGIVVLLFTLVQRSSEECREALRRSGTDVNVSYSLPHFIANTTLLNIVVHRDDLYLGAVNKIYVLDKNLQDFVEYPTGPVLEHPDCAPCENCSAIAHSSKADLRDNVNMALLIETYYHYEQLIICGSVDGGACWRFPLPLGEPTDFHSKKHCMFSHQADEESKDCPDCIVSTLGTKVLLVEKDRFVNFFVGNTINSSSHPFSSLHSISVRRLKETLDGFKFLTDQSYIDVLPQFRDSYPIKYIHAFESNQFIYFLTVQKETVESQTFHTRIIRFCSMDSELHSYMEMPLECILTEKRRRRSTNKEVFNVLQAAYVSKPGAHLARQIGTGLNDDILYGVFAQSKPDSAEPMNRSAICAFPIKYINEFFSKIVNKNNVRCLQHFYGNHHRHCANRTFQWNSSGCEVRDDEYRMEFTTPLQRVDLSMGKFSHVLLTSISTFIKGNLTVANLGTAEGRFMQVVISRSDPPSPHVDFLLDNHPVSPEVIVVNSSMPDGYTLVITGKKITKIPLNGLGCDHFKSCRQCLSAPSFVQCGWCDDRCTTAEKCDYGLWTQDTCPPTIFEIIPSSAPLEGGTMLTVCGWDFGFQKNNKFELRKTKVLVGNQSCTLFFNESSTNKLKCTAGPSTQPRLNISISVSNAQGGRRSKTFSYVDPKITSISPRYGPIAGGTLLTLTGKYLNCGSSRHISIGGKTCTLRSVSEHVLECYTPSQTVPTLYAVKMKIDLANREAGTFIYKEDPVIHEIHPTKSFLSGGSTITGFGKNLNGSSAPKMIIQVAEVGRNFTVACQSRSNAEIICCTTPSLQQLNLPPPFKTKAFFVFDGVQSANFDLIYVHNPVFKLFEKPVMISMGNKHVLEIKGDHIDSEAVKGEVLKVGNKSCENVLLNLESVFCTVPRDLLKVNTELNIEWQQAVSSTILGKVIVLPDQNFTGLIAGVASISVLLLLFLGLFLWMKKKKQIKDLGSELVRYDPRVHTPHLDRLVSARSISPTAEMVSNESVDYRATFPEDQFPNSSQNGSCRQAHYPLADLSPILSSGDSNPSSPLLQSNVHIDISALNPDLVQAVQHVVIGPDSLMVHFTEIIGRGHFGCVYHGTLLDNDDKKIHCAVKSLNRITDIEEVSQFLTEGIIMKDFSHPNVLSLLGICLRREGSPLVVLPYMKHGDLRNFIRNESHNPTVKDLIGFGLQVAKGMKYLASKKFVHRDLAARNCMLDEKFTVKVADFGLARDMYDKEYYSVHNKTGAKLPVKWMALESLQTQKFTSKSDVWSFGVLLWELMTRGAPPYPDVNTFDITVYLLQGRRLLQPEYCPDPLFEVMLKCWHPNAEMRPSFSELVSKIAVIFSTFIGEHYVHVNATYVNVKCVAPYPSLLSSQDAPDRVVDT.

A signal peptide spans 1 to 24; the sequence is MKPPTVHIPGIVVLLFTLVQRSSE. Residues 25-933 are Extracellular-facing; sequence ECREALRRSG…VIVLPDQNFT (909 aa). Positions 27–516 constitute a Sema domain; the sequence is REALRRSGTD…TGKKITKIPL (490 aa). N-linked (GlcNAc...) asparagine glycans are attached at residues Asn38, Asn49, and Asn99. 4 disulfide bridges follow: Cys94–Cys100, Cys97–Cys160, Cys133–Cys141, and Cys173–Cys176. Residues Asn203 and Asn359 are each glycosylated (N-linked (GlcNAc...) asparagine). 2 disulfide bridges follow: Cys299/Cys364 and Cys386/Cys398. Asn400, Asn406, Asn450, and Asn495 each carry an N-linked (GlcNAc...) asparagine glycan. Cystine bridges form between Cys521/Cys539, Cys527/Cys562, Cys530/Cys546, and Cys542/Cys552. IPT/TIG domains lie at 564-656, 658-740, and 743-837; these read PTIF…FSYV, PKIT…FIYK, and PVIH…LIYV. O-linked (Man) threonine glycosylation is present at Thr583. N-linked (GlcNAc...) asparagine glycans are attached at residues Asn608, Asn616, and Asn636. O-linked (Man) threonine glycans are attached at residues Thr677 and Thr762. Residues Asn769, Asn786, Asn880, and Asn931 are each glycosylated (N-linked (GlcNAc...) asparagine). A helical transmembrane segment spans residues 934–956; sequence GLIAGVASISVLLLLFLGLFLWM. Residues 957–1382 lie on the Cytoplasmic side of the membrane; sequence KKKKQIKDLG…QDAPDRVVDT (426 aa). Position 967 is a phosphoserine (Ser967). Position 978 is a phosphothreonine (Thr978). Residues Ser991, Ser998, and Ser1001 each carry the phosphoserine modification. Tyr1004 carries the post-translational modification Phosphotyrosine. Residues 1079–1346 form the Protein kinase domain; that stretch reads VHFTEIIGRG…KIAVIFSTFI (268 aa). Residues 1085–1093 and Lys1111 contribute to the ATP site; that span reads IGRGHFGCV. Asp1205 acts as the Proton acceptor in catalysis. The tract at residues 1213-1382 is interaction with RANBP9; sequence LDEKFTVKVA…QDAPDRVVDT (170 aa). Tyr1231 bears the Phosphotyrosine mark. Residues Tyr1235 and Tyr1236 each carry the phosphotyrosine; by autocatalysis modification. Position 1290 is a phosphothreonine (Thr1290). The interaction with MUC20 stretch occupies residues 1321 to 1360; that stretch reads WHPNAEMRPSFSELVSKIAVIFSTFIGEHYVHVNATYVNV. 2 positions are modified to phosphotyrosine; by autocatalysis: Tyr1350 and Tyr1357. The residue at position 1366 (Tyr1366) is a Phosphotyrosine.

It belongs to the protein kinase superfamily. Tyr protein kinase family. As to quaternary structure, heterodimer made of an alpha chain (50 kDa) and a beta chain (145 kDa) which are disulfide linked. Binds PLXNB1. Interacts when phosphorylated with downstream effectors including STAT3, PIK3R1, SRC, PCLG1, GRB2 and GAB1. Interacts with SPSB1, SPSB2 and SPSB4. Interacts with INPP5D/SHIP1. When phosphorylated at Tyr-1357, interacts with INPPL1/SHIP2. Interacts with RANBP9 and RANBP10, as well as SPSB1, SPSB2, SPSB3 and SPSB4. SPSB1 binding occurs in the presence and in the absence of HGF, however HGF treatment has a positive effect on this interaction. Interacts with MUC20; prevents interaction with GRB2 and suppresses hepatocyte growth factor-induced cell proliferation. Interacts with GRB10. Interacts with PTPN1 and PTPN2. Interacts with HSP90AA1 and HSP90AB1; the interaction suppresses MET kinase activity. Interacts with tensin TNS3. Interacts (when phosphorylated) with tensin TNS4 (via SH2 domain); the interaction increases MET protein stability by inhibiting MET endocytosis and subsequent lysosomal degradation. Post-translationally, autophosphorylated in response to ligand binding on Tyr-1235 and Tyr-1236 in the kinase domain leading to further phosphorylation of Tyr-1350 and Tyr-1357 in the C-terminal multifunctional docking site. Dephosphorylated by PTPRJ at Tyr-1350 and Tyr-1366. Dephosphorylated by PTPN1 and PTPN2. In terms of processing, ubiquitinated. Ubiquitination by CBL regulates the receptor stability and activity through proteasomal degradation. O-mannosylation of IPT/TIG domains by TMEM260 is required for protein maturation. O-mannosylated residues are composed of single mannose glycans that are not elongated or modified.

The protein resides in the membrane. The catalysed reaction is L-tyrosyl-[protein] + ATP = O-phospho-L-tyrosyl-[protein] + ADP + H(+). In its inactive state, the C-terminal tail interacts with the catalytic domain and inhibits the kinase activity. Upon ligand binding, the C-terminal tail is displaced and becomes phosphorylated, thus increasing the kinase activity. Its function is as follows. Receptor tyrosine kinase that transduces signals from the extracellular matrix into the cytoplasm by binding to hepatocyte growth factor/HGF ligand. Regulates many physiological processes including proliferation, scattering, morphogenesis and survival. Ligand binding at the cell surface induces autophosphorylation of MET on its intracellular domain that provides docking sites for downstream signaling molecules. Following activation by ligand, interacts with the PI3-kinase subunit PIK3R1, PLCG1, SRC, GRB2, STAT3 or the adapter GAB1. Recruitment of these downstream effectors by MET leads to the activation of several signaling cascades including the RAS-ERK, PI3 kinase-AKT, or PLCgamma-PKC. The RAS-ERK activation is associated with the morphogenetic effects while PI3K/AKT coordinates prosurvival effects. During embryonic development, MET signaling plays a role in gastrulation, development and migration of muscles and neuronal precursors, angiogenesis and kidney formation. In adults, participates in wound healing as well as organ regeneration and tissue remodeling. Also promotes differentiation and proliferation of hematopoietic cells. The chain is Hepatocyte growth factor receptor (MET) from Ornithorhynchus anatinus (Duckbill platypus).